A 129-amino-acid polypeptide reads, in one-letter code: Glycine cleavage system H protein (129 aa).

The Lipoyl-binding domain maps to 24 to 106 (SYTVGITEHA…YGDGWFFRIM (83 aa)). Lysine 65 is subject to N6-lipoyllysine.

Belongs to the GcvH family. In terms of assembly, the glycine cleavage system is composed of four proteins: P, T, L and H. It depends on (R)-lipoate as a cofactor.

Its function is as follows. The glycine cleavage system catalyzes the degradation of glycine. The H protein shuttles the methylamine group of glycine from the P protein to the T protein. This is Glycine cleavage system H protein from Shewanella denitrificans (strain OS217 / ATCC BAA-1090 / DSM 15013).